Reading from the N-terminus, the 104-residue chain is Large ribosomal subunit protein bL21 (104 aa).

Belongs to the bacterial ribosomal protein bL21 family. Part of the 50S ribosomal subunit. Contacts protein L20.

Functionally, this protein binds to 23S rRNA in the presence of protein L20. The protein is Large ribosomal subunit protein bL21 of Endomicrobium trichonymphae.